Consider the following 155-residue polypeptide: MRSVGLSILVKKLKKIITAPVEGLGYELVGIEFIQSRQSVLRIYIDHEEGVTVDSCADVSKEVSLVLDVEDPITVPYNLEISSPGLDRPLFTARHYAQFIGEKVNLMLRMAIQNQRKWQGIIKSVDGESIIVAVNQKDEVFALSNIQKANLVPHF.

It belongs to the RimP family.

The protein localises to the cytoplasm. Functionally, required for maturation of 30S ribosomal subunits. The protein is Ribosome maturation factor RimP of Hamiltonella defensa subsp. Acyrthosiphon pisum (strain 5AT).